The sequence spans 1183 residues: SR-related and CTD-associated factor 4 (1183 aa).

A CID domain is found at 1-139 (MDAVNAFNQE…PLLDMAAGTS (139 aa)). Lysine 49 carries the post-translational modification N6-acetyllysine. Phosphoserine is present on serine 154. Disordered stretches follow at residues 299-324 (VPVP…VQQP) and 348-561 (HHQV…QIKS). A compositionally biased stretch (pro residues) spans 367–380 (APPPFPPMPQPGMP). Low complexity predominate over residues 381–398 (QPGMAQPGLAQPGMAQPT). Positions 399–410 (MPQPGMPQPGMP) are enriched in pro residues. Residues 411 to 428 (QPGMAQPGLAQPGMAQPG) show a composition bias toward low complexity. Residues 429-440 (MPQPAMPQPAMP) are compositionally biased toward pro residues. A compositionally biased stretch (polar residues) spans 457-469 (PTFQSTFQPQNEP). Basic and acidic residues predominate over residues 488–498 (EVKRHVPESRK). The span at 499 to 536 (SRSRSPKRRRSRSGSRSRRSRHRRSRSRSRDRRRHSPR) shows a compositional bias: basic residues. Positions 538–553 (RSQERRDREKERERRQ) are enriched in basic and acidic residues. In terms of domain architecture, RRM spans 569-643 (TTLWVGQLDK…KSIKIAWALN (75 aa)). Disordered regions lie at residues 691–722 (WKGI…IPKP), 800–858 (LPPG…SLPT), and 920–1183 (MPPH…EPPR). Phosphoserine is present on serine 717. 2 stretches are compositionally biased toward pro residues: residues 800–823 (LPPG…PPIS) and 920–952 (MPPH…PPHG). Residues 1006–1020 (SPSQQPAPAQQQPPQ) show a composition bias toward low complexity. Serine 1042 is modified (phosphoserine). Residues 1047–1122 (VENDRERYGS…NRKEKHEVAD (76 aa)) show a composition bias toward basic and acidic residues. Residues 1136–1145 (QVGTIDTVSE) show a composition bias toward polar residues.

Interacts with POLR2A; via C-terminal heptapeptide repeat domain (CTD) phosphorylated at 'Ser-2' and 'Ser-5'.

The protein localises to the nucleus. Its function is as follows. Anti-terminator protein required to prevent early mRNA termination during transcription. Together with SCAF8, acts by suppressing the use of early, alternative poly(A) sites, thereby preventing the accumulation of non-functional truncated proteins. Mechanistically, associates with the phosphorylated C-terminal heptapeptide repeat domain (CTD) of the largest RNA polymerase II subunit (POLR2A), and subsequently binds nascent RNA upstream of early polyadenylation sites to prevent premature mRNA transcript cleavage and polyadenylation. Independently of SCAF8, also acts as a suppressor of transcriptional readthrough. The sequence is that of SR-related and CTD-associated factor 4 from Mus musculus (Mouse).